Consider the following 404-residue polypeptide: CD209 antigen (404 aa).

Topologically, residues 1-37 are cytoplasmic; that stretch reads MSDSKEPRLQQLDLLEEEQLGGVGFRQTRGYKSLAGC. 3 short sequence motifs (endocytosis signal) span residues 14 to 15, 16 to 18, and 31 to 34; these read LL, EEE, and YKSL. Residues 38–58 form a helical; Signal-anchor for type II membrane protein membrane-spanning segment; it reads LGHGPLVLQLLSFTLLAGLLV. Topologically, residues 59–404 are extracellular; it reads QVSKVPSSLS…APTTPNPPPA (346 aa). Residue Asn-80 is glycosylated (N-linked (GlcNAc...) asparagine). 7 tandem repeats follow at residues 96-118, 119-141, 142-164, 165-187, 188-210, 211-233, and 234-257. The segment at 96 to 257 is 7 X approximate tandem repeats; that stretch reads KQQEIYQELT…AVERLCHPCP (162 aa). 3 disulfides stabilise this stretch: Cys-256–Cys-267, Cys-284–Cys-377, and Cys-356–Cys-369. Positions 263-378 constitute a C-type lectin domain; the sequence is FQGNCYFMSN…CNLAKFWICK (116 aa). Positions 347, 349, 351, 354, 365, and 366 each coordinate Ca(2+). Residues 382 to 404 form a disordered region; it reads ASCSGDEERLLSPAPTTPNPPPA.

Homotetramer. Interacts with C1QBP; the interaction is indicative for a C1q:C1QBP:CD209 signaling complex. Interacts with ICAM2 and ICAM3 by binding to mannose-like carbohydrates. Interacts (via C-type lectin domain) with CEACAM1 (via Lewis X moieties); this interaction is regulated by the glycosylation pattern of CEACAM1 on cell types and regulates contact between dendritic cells and neutrophils.

The protein resides in the membrane. In terms of biological role, pathogen-recognition receptor expressed on the surface of immature dendritic cells (DCs) and involved in initiation of primary immune response. Thought to mediate the endocytosis of pathogens which are subsequently degraded in lysosomal compartments. The receptor returns to the cell membrane surface and the pathogen-derived antigens are presented to resting T-cells via MHC class II proteins to initiate the adaptive immune response. Probably recognizes in a calcium-dependent manner high mannose N-linked oligosaccharides in a variety of pathogen antigens. On DCs it is a high affinity receptor for ICAM2 and ICAM3 by binding to mannose-like carbohydrates. May act as a DC rolling receptor that mediates transendothelial migration of DC presursors from blood to tissues by binding endothelial ICAM2. Seems to regulate DC-induced T-cell proliferation by binding to ICAM3 on T-cells in the immunological synapse formed between DC and T-cells. In Macaca mulatta (Rhesus macaque), this protein is CD209 antigen (CD209).